A 130-amino-acid chain; its full sequence is Small ribosomal subunit protein uS8 (130 aa).

It belongs to the universal ribosomal protein uS8 family.

The chain is Small ribosomal subunit protein uS8 (RPS15A) from Strongylocentrotus purpuratus (Purple sea urchin).